Reading from the N-terminus, the 95-residue chain is Large ribosomal subunit protein uL23 (95 aa).

This sequence belongs to the universal ribosomal protein uL23 family. Part of the 50S ribosomal subunit. Contacts protein L29, and trigger factor when it is bound to the ribosome.

Functionally, one of the early assembly proteins it binds 23S rRNA. One of the proteins that surrounds the polypeptide exit tunnel on the outside of the ribosome. Forms the main docking site for trigger factor binding to the ribosome. In Desulforamulus reducens (strain ATCC BAA-1160 / DSM 100696 / MI-1) (Desulfotomaculum reducens), this protein is Large ribosomal subunit protein uL23.